Here is a 209-residue protein sequence, read N- to C-terminus: Uracil phosphoribosyltransferase (209 aa).

Residues Arg-79, Arg-104, and 131–139 (DPMLATGGS) each bind 5-phospho-alpha-D-ribose 1-diphosphate. Uracil is bound by residues Ile-194 and 199–201 (GDA). Asp-200 lines the 5-phospho-alpha-D-ribose 1-diphosphate pocket.

Belongs to the UPRTase family. Mg(2+) serves as cofactor.

The catalysed reaction is UMP + diphosphate = 5-phospho-alpha-D-ribose 1-diphosphate + uracil. It participates in pyrimidine metabolism; UMP biosynthesis via salvage pathway; UMP from uracil: step 1/1. Allosterically activated by GTP. Catalyzes the conversion of uracil and 5-phospho-alpha-D-ribose 1-diphosphate (PRPP) to UMP and diphosphate. The sequence is that of Uracil phosphoribosyltransferase from Streptococcus suis (strain 05ZYH33).